A 291-amino-acid polypeptide reads, in one-letter code: G1/S-specific cyclin-D1 (291 aa).

At threonine 282 the chain carries Phosphothreonine.

Belongs to the cyclin family. Cyclin D subfamily. As to quaternary structure, interacts with the cdk4 and cdk6 protein kinases to form a serine/threonine kinase holoenzyme complex. The cyclin subunit imparts substrate specificity to the complex. Phosphorylation at Thr-282 by MAP kinases is required for ubiquitination and degradation by the DCX(AMBRA1) complex. Post-translationally, ubiquitinated by the DCX(AMBRA1) complex during the transition from G1 to S cell phase, leading to its degradation. The DCX(AMBRA1) complex represents the major regulator of CCND1 stability during the G1/S transition.

The protein localises to the nucleus. Its subcellular location is the cytoplasm. Functionally, regulatory component of the cyclin D1-CDK4 (DC) complex that phosphorylates and inhibits members of the retinoblastoma (RB) protein family including RB1 and regulates the cell-cycle during G(1)/S transition. Phosphorylation of RB1 allows dissociation of the transcription factor E2F from the RB/E2F complex and the subsequent transcription of E2F target genes which are responsible for the progression through the G(1) phase. Hypophosphorylates RB1 in early G(1) phase. Cyclin D-CDK4 complexes are major integrators of various mitogenenic and antimitogenic signals. In Xenopus laevis (African clawed frog), this protein is G1/S-specific cyclin-D1 (ccnd1).